Consider the following 121-residue polypeptide: Large ribosomal subunit protein uL22 (121 aa).

The protein belongs to the universal ribosomal protein uL22 family. Part of the 50S ribosomal subunit.

Functionally, this protein binds specifically to 23S rRNA; its binding is stimulated by other ribosomal proteins, e.g. L4, L17, and L20. It is important during the early stages of 50S assembly. It makes multiple contacts with different domains of the 23S rRNA in the assembled 50S subunit and ribosome. The globular domain of the protein is located near the polypeptide exit tunnel on the outside of the subunit, while an extended beta-hairpin is found that lines the wall of the exit tunnel in the center of the 70S ribosome. This Synechococcus sp. (strain CC9902) protein is Large ribosomal subunit protein uL22.